We begin with the raw amino-acid sequence, 540 residues long: Chaperonin GroEL (540 aa).

ATP contacts are provided by residues 29 to 32 (TLGP), 86 to 90 (DGTTT), Gly-413, 476 to 478 (NAA), and Asp-492.

This sequence belongs to the chaperonin (HSP60) family. In terms of assembly, forms a cylinder of 14 subunits composed of two heptameric rings stacked back-to-back. Interacts with the co-chaperonin GroES.

It is found in the cytoplasm. It catalyses the reaction ATP + H2O + a folded polypeptide = ADP + phosphate + an unfolded polypeptide.. In terms of biological role, together with its co-chaperonin GroES, plays an essential role in assisting protein folding. The GroEL-GroES system forms a nano-cage that allows encapsulation of the non-native substrate proteins and provides a physical environment optimized to promote and accelerate protein folding. In Streptococcus gordonii, this protein is Chaperonin GroEL.